Here is a 446-residue protein sequence, read N- to C-terminus: RUN domain-containing protein 3A (446 aa).

Residues 1–298 (MEASFVQTTM…LQLQLEEAAA (298 aa)) form an interaction with RAP2A region. Residues 52–189 (DDSSEEFVNF…IDFSFCLKGE (138 aa)) enclose the RUN domain. T215 is modified (phosphothreonine). The tract at residues 216–239 (DEEERHSAESSTSEDNSPEHPYLP) is disordered. A Phosphoserine modification is found at S232. The stretch at 267–322 (YLEELVRLRESQLKDLEAENRRLQLQLEEAAAQNQREKRELEGVILELQEQLTGLI) forms a coiled coil. Over residues 372–384 (PLSAEASLSSDSQ) the composition is skewed to polar residues. The disordered stretch occupies residues 372 to 404 (PLSAEASLSSDSQRLGEGTRDEEPWGPIGKDPT). S416 and S419 each carry phosphoserine.

It belongs to the RUNDC3 family. Interacts with the GTP-bound form of RAP2A.

May act as an effector of RAP2A in neuronal cells. The polypeptide is RUN domain-containing protein 3A (RUNDC3A) (Homo sapiens (Human)).